We begin with the raw amino-acid sequence, 1152 residues long: Autotransporter adhesin BpaC (1152 aa).

An N-terminal signal peptide occupies residues 1-71 (MNRIFKSIWC…PFAEEAMAAN (71 aa)). Positions 72 to 1061 (NAGVCLTYNG…VGQLNSAVSG (990 aa)) are surface exposed passenger domain. Disordered regions lie at residues 420–886 (GLQG…AGAT) and 900–949 (TATG…ESAA). The span at 427 to 442 (ANTGTASGDNSTASGD) shows a compositional bias: polar residues. The segment covering 443–504 (NATASGTNST…ANGTNSTASG (62 aa)) has biased composition (low complexity). Positions 505-519 (DNSTASGTNASATGE) are enriched in polar residues. Low complexity predominate over residues 520 to 588 (NSTATGTDST…ANGTNSTASG (69 aa)). The segment covering 589–603 (DNSTASGTNASATGE) has biased composition (polar residues). The segment covering 604–630 (NSTATGTDSTASGSNSTANGTNSTASG) has biased composition (low complexity). A compositionally biased stretch (polar residues) spans 631-645 (DNSTASGTNASATGE). The segment covering 646 to 672 (NSTATGTDSTASGSNSTANGTNSTASG) has biased composition (low complexity). Over residues 673 to 687 (DNSTASGTNASATGE) the composition is skewed to polar residues. Residues 688-714 (NSTATGTDSTASGSNSTANGTNSTASG) show a composition bias toward low complexity. Positions 715-729 (DNSTASGTNASATGE) are enriched in polar residues. Low complexity predominate over residues 730 to 756 (NSTATGTDSTASGSNSTANGANSTASG). The span at 757–771 (DNSTASGTNASATGE) shows a compositional bias: polar residues. Low complexity-rich tracts occupy residues 772 to 840 (NSTA…TASG) and 848 to 886 (TNAS…AGAT). The interval 1062–1099 (IRNQMDGMQGQIDTLARDAYSGIAAATALTMIPDVDPG) is outer membrane translocation of the passenger domain. A translocator domain region spans residues 1100 to 1152 (KTLAVGIGTANFKGYQASALGATARITQNLKVKTGVSYSGSNYVWGAGMSYQW).

This sequence belongs to the autotransporter-2 (AT-2) (TC 1.B.40) family. Homotrimer.

Its subcellular location is the cell surface. It is found in the cell outer membrane. Functionally, involved in virulence. Mediates adherence to human respiratory epithelial cells. This chain is Autotransporter adhesin BpaC, found in Burkholderia pseudomallei (strain 1026b).